The primary structure comprises 1544 residues: Zinc finger protein GLI2 (1544 aa).

A disordered region spans residues 1–26; it reads METSAPAPALEKKEAKSGLLEDSSFP. 4 positions are modified to phosphoserine: S145, S230, S232, and S238. The segment at 338–364 is disordered; it reads SSSSSNCLNDANQNKQNSESAVSSTVN. Position 385 is a phosphoserine; by DYRK2 (S385). The segment at 417-444 adopts a C2H2-type 1 zinc-finger fold; the sequence is TNCHWADCTKEYDTQEQLVHHINNEHIH. Residues 455-477 form a C2H2-type 2; degenerate zinc finger; the sequence is QACTREQKPFKAQYMLVVHMRRH. C2H2-type zinc fingers lie at residues 483–507, 513–538, and 544–569; these read HKCT…LRSH, YVCE…NRTH, and YICK…KTVH. Disordered regions lie at residues 557 to 619 and 635 to 682; these read DPSS…TSHT and GLCQ…ALAD. The span at 569 to 585 shows a compositional bias: basic and acidic residues; that stretch reads HGPDAHVTKKQRNDVHV. The segment covering 637–657 has biased composition (low complexity); the sequence is CQSSPGAQSSCSSEPSPLGSA. Residue S707 is modified to Phosphoserine. T708 is subject to Phosphothreonine. K740 carries the post-translational modification N6-acetyllysine; by EP300. 6 disordered regions span residues 781-800, 805-861, 908-963, 995-1016, 1166-1220, and 1422-1457; these read SQLQ…AYTV, SGIS…PGLL, ALPG…RRPD, VQSH…RPPS, FGQY…CLGM, and GGCP…VSST. Composition is skewed to polar residues over residues 790–800 and 805–814; these read STSTMSSAYTV and SGISPYFSSR. Residues 954-963 show a composition bias toward basic and acidic residues; the sequence is RASDPVRRPD. Phosphoserine; by DYRK2 is present on S997. Polar residues-rich tracts occupy residues 997-1009, 1173-1190, and 1200-1209; these read SHPS…TRNA, NPQS…TQPH, and SRGSYTQQPR.

It belongs to the GLI C2H2-type zinc-finger protein family. Interacts with ZIC1 and ZIC2. Interacts with STK36. Interacts with SUFU; this inhibits transcriptional activation mediated by GLI2. Interacts (via C-terminal internal region) with FOXC1 (via N-terminus); this interaction is direct and increases GLI2 DNA-binding and transcriptional activity through a smoothened (SMO)-independent Hedgehog (Hh) signaling pathway. In terms of processing, phosphorylated in vitro by ULK3. Phosphorylated by DYRK2; this inhibits GLI2 transcription factor activity and promotes proteasomal degradation of GLI2. Post-translationally, acetylation at Lys-740 inhibits Hh target gene expression, probably by impeding entry into chromatin thus preventing promoter occupancy.

It localises to the nucleus. The protein resides in the cytoplasm. It is found in the cell projection. Its subcellular location is the cilium. Functions as a transcription regulator in the hedgehog (Hh) pathway. Functions as a transcriptional activator. May also function as transcriptional repressor. Requires STK36 for full transcriptional activator activity. Binds to the DNA sequence 5'-GAACCACCCA-3' which is part of the TRE-2S regulatory element. Is involved in the smoothened (SHH) signaling pathway. Required for normal skeleton development. This Mus musculus (Mouse) protein is Zinc finger protein GLI2.